The chain runs to 160 residues: Small RNA binding protein 1 (160 aa).

In terms of domain architecture, RRM spans 8–86; it reads FRCFVGGLAW…RNITVNEAQQ (79 aa). Residues 82–160 form a disordered region; it reads NEAQQRGGGG…GGGSEGGWRN (79 aa). Gly residues predominate over residues 87–160; sequence RGGGGGGGYN…GGGSEGGWRN (74 aa). The segment at 88 to 157 is glycine-rich (GR) required for cell-to-cell movement; sequence GGGGGGGYNR…GSGGGGSEGG (70 aa).

Belongs to the GR-RBP family. In terms of assembly, binds to small phloem-mobile single-stranded RNAs (ss-sRNA, e.g. small interfering RNA (siRNA) and microRNA (miRNA)) in the phloeme exudate, including viral-derived sRNA (vsiRNA). As to expression, accumulates in phloem exudates.

Its subcellular location is the secreted. Possibly has a role in RNA transcription or processing during stress. Binds sequence non-specifically to RNAs and DNAs. Mediates cell-to-cell trafficking of RNA interference (RNAi) signals (small RNAs (sRNA), e.g. small interfering RNA (siRNA) and microRNA (miRNA)) which regulate growth and development, as well as responses to environmental inputs, including pathogen attack; can compromise zucchini yellow mosaic virus (ZYMV) and tobacco rattle virus (TRV) infections at the early stage. This chain is Small RNA binding protein 1, found in Cucumis sativus (Cucumber).